A 52-amino-acid polypeptide reads, in one-letter code: MVKCFDFFLSLNFGKMTKLLVWRTDKPQDDMPQTPNSQVTIVSRDHPRGGNY.

Positions 25-52 (DKPQDDMPQTPNSQVTIVSRDHPRGGNY) are disordered. Positions 31–41 (MPQTPNSQVTI) are enriched in polar residues. The segment covering 43–52 (SRDHPRGGNY) has biased composition (basic and acidic residues).

As to expression, expressed in roots. Barely detected in flowers.

In terms of biological role, produces a rapid alkalinization of the cellular media and the induction of defense-related genes, including chitinase 1b, chalcone synthase and CYP93A1. Not active in tobacco or Arabidopsis. The receptor for GmPep914 is probably different from the receptor for GmSubPep. The sequence is that of Protein PROPEP914 (PROPEP914) from Glycine max (Soybean).